We begin with the raw amino-acid sequence, 401 residues long: Lipid-A-disaccharide synthase (401 aa).

The protein belongs to the LpxB family.

It carries out the reaction a lipid X + a UDP-2-N,3-O-bis[(3R)-3-hydroxyacyl]-alpha-D-glucosamine = a lipid A disaccharide + UDP + H(+). Its pathway is bacterial outer membrane biogenesis; LPS lipid A biosynthesis. Its function is as follows. Condensation of UDP-2,3-diacylglucosamine and 2,3-diacylglucosamine-1-phosphate to form lipid A disaccharide, a precursor of lipid A, a phosphorylated glycolipid that anchors the lipopolysaccharide to the outer membrane of the cell. This is Lipid-A-disaccharide synthase from Ruegeria pomeroyi (strain ATCC 700808 / DSM 15171 / DSS-3) (Silicibacter pomeroyi).